The chain runs to 239 residues: Ureidoacrylate amidohydrolase RutB (239 aa).

Asp-35 acts as the Proton acceptor in catalysis. Lys-144 is an active-site residue. The Nucleophile role is filled by Cys-177.

This sequence belongs to the isochorismatase family. RutB subfamily.

The enzyme catalyses (Z)-3-ureidoacrylate + H2O + H(+) = (Z)-3-aminoacrylate + NH4(+) + CO2. It carries out the reaction (Z)-3-ureidoacrylate + H2O = (Z)-3-aminoacrylate + carbamate + H(+). The catalysed reaction is (Z)-2-methylureidoacrylate + H2O + H(+) = (Z)-2-methylaminoacrylate + NH4(+) + CO2. Functionally, hydrolyzes ureidoacrylate to form aminoacrylate and carbamate. The carbamate hydrolyzes spontaneously, thereby releasing one of the nitrogen atoms of the pyrimidine ring as ammonia and one of its carbon atoms as CO2. In Caulobacter segnis (strain ATCC 21756 / DSM 7131 / JCM 7823 / NBRC 15250 / LMG 17158 / TK0059) (Mycoplana segnis), this protein is Ureidoacrylate amidohydrolase RutB.